The primary structure comprises 122 residues: Large ribosomal subunit protein uL18 (122 aa).

The protein belongs to the universal ribosomal protein uL18 family. Part of the 50S ribosomal subunit; part of the 5S rRNA/L5/L18/L25 subcomplex. Contacts the 5S and 23S rRNAs.

In terms of biological role, this is one of the proteins that bind and probably mediate the attachment of the 5S RNA into the large ribosomal subunit, where it forms part of the central protuberance. This is Large ribosomal subunit protein uL18 from Mycobacterium avium (strain 104).